We begin with the raw amino-acid sequence, 556 residues long: Tripartite motif-containing protein 16 (556 aa).

The interval Met-1 to Ala-60 is disordered. Positions Val-33–Ala-56 are enriched in basic and acidic residues. 2 B box-type zinc fingers span residues Glu-64–Pro-113 and Gln-117–Ser-156. Ser-107 is subject to Phosphoserine. 2 coiled-coil regions span residues Asn-163–Ala-266 and Asn-312–Glu-332. A Phosphoserine modification is found at Ser-195. Residues Tyr-347–Glu-545 enclose the B30.2/SPRY domain.

This sequence belongs to the TRIM/RBCC family. Homodimerizes via its coiled-coil domain. Heterodimerizes with MID1, TRIM24 and PML. Interacts with Galectin-3/LGALS3 in a ULK1-dependent manner; this interaction mediates autophagy of damage endomembranes. Interacts with BECN1. Interacts with ATG16L1. Interacts with p62/SQSTM and LC3B/MAP1LC3B. In terms of processing, phosphorylated by ULK1. Auto-ubiquitinates via its B-Boxes. Widely expressed. Expressed in basal keratinocytes.

The protein resides in the cytoplasm. It catalyses the reaction S-ubiquitinyl-[E2 ubiquitin-conjugating enzyme]-L-cysteine + [acceptor protein]-L-lysine = [E2 ubiquitin-conjugating enzyme]-L-cysteine + N(6)-ubiquitinyl-[acceptor protein]-L-lysine.. Its function is as follows. E3 ubiquitin ligase that plays an essential role in the organization of autophagic response and ubiquitination upon lysosomal and phagosomal damages. Plays a role in the stress-induced biogenesis and degradation of protein aggresomes by regulating the p62-KEAP1-NRF2 signaling and particularly by modulating the ubiquitination levels and thus stability of NRF2. Acts as a scaffold protein and facilitates autophagic degradation of protein aggregates by interacting with p62/SQSTM, ATG16L1 and LC3B/MAP1LC3B. In turn, protects the cell against oxidative stress-induced cell death as a consequence of endomembrane damage. This is Tripartite motif-containing protein 16 (Trim16) from Mus musculus (Mouse).